We begin with the raw amino-acid sequence, 271 residues long: Protein PXR1 (271 aa).

The 48-residue stretch at 25–72 (TSRFGHQFLEKFGWKPGMGLGLYPMNSNTSHIKVSIKDDNVGLGAKLK) folds into the G-patch domain. Positions 147–239 (SNAKKRKREG…SASNIPDAVN (93 aa)) are disordered. Positions 157–168 (DDSEDEDDDDKE) are enriched in acidic residues. The segment covering 175–203 (KKHKKHKKHKKDKKKDKKDKKEHKKHKKE) has biased composition (basic residues). Positions 204–221 (EKRLKKEKRAEKTKETKK) are enriched in basic and acidic residues. Ser230 is subject to Phosphoserine.

It belongs to the PINX1 family. As to quaternary structure, interacts with EST2.

The protein localises to the nucleus. It localises to the nucleolus. Involved in rRNA-processing at A0, A1 and A2 sites through its action in U18 and U24 snoRNA 3'-end final trimming. Negative regulator of telomerase throughX competition for binding to EST2 with TLC1. The protein is Protein PXR1 (PXR1) of Saccharomyces cerevisiae (strain YJM789) (Baker's yeast).